The primary structure comprises 407 residues: Tryptophan synthase beta chain (407 aa).

Lys91 bears the N6-(pyridoxal phosphate)lysine mark.

It belongs to the TrpB family. In terms of assembly, tetramer of two alpha and two beta chains. It depends on pyridoxal 5'-phosphate as a cofactor.

The catalysed reaction is (1S,2R)-1-C-(indol-3-yl)glycerol 3-phosphate + L-serine = D-glyceraldehyde 3-phosphate + L-tryptophan + H2O. It participates in amino-acid biosynthesis; L-tryptophan biosynthesis; L-tryptophan from chorismate: step 5/5. In terms of biological role, the beta subunit is responsible for the synthesis of L-tryptophan from indole and L-serine. This is Tryptophan synthase beta chain from Streptococcus pneumoniae (strain 70585).